Consider the following 96-residue polypeptide: Co-chaperonin GroES (96 aa).

This sequence belongs to the GroES chaperonin family. In terms of assembly, heptamer of 7 subunits arranged in a ring. Interacts with the chaperonin GroEL.

The protein localises to the cytoplasm. Its function is as follows. Together with the chaperonin GroEL, plays an essential role in assisting protein folding. The GroEL-GroES system forms a nano-cage that allows encapsulation of the non-native substrate proteins and provides a physical environment optimized to promote and accelerate protein folding. GroES binds to the apical surface of the GroEL ring, thereby capping the opening of the GroEL channel. This Acidithiobacillus ferrooxidans (strain ATCC 23270 / DSM 14882 / CIP 104768 / NCIMB 8455) (Ferrobacillus ferrooxidans (strain ATCC 23270)) protein is Co-chaperonin GroES.